The chain runs to 355 residues: RNA 3'-terminal phosphate cyclase (355 aa).

Residues Q109 and 291 to 295 (HLADQ) each bind ATP. The Tele-AMP-histidine intermediate role is filled by H316.

Belongs to the RNA 3'-terminal cyclase family. Type 1 subfamily.

It is found in the cytoplasm. The catalysed reaction is a 3'-end 3'-phospho-ribonucleotide-RNA + ATP = a 3'-end 2',3'-cyclophospho-ribonucleotide-RNA + AMP + diphosphate. Catalyzes the conversion of 3'-phosphate to a 2',3'-cyclic phosphodiester at the end of RNA. The mechanism of action of the enzyme occurs in 3 steps: (A) adenylation of the enzyme by ATP; (B) transfer of adenylate to an RNA-N3'P to produce RNA-N3'PP5'A; (C) and attack of the adjacent 2'-hydroxyl on the 3'-phosphorus in the diester linkage to produce the cyclic end product. The biological role of this enzyme is unknown but it is likely to function in some aspects of cellular RNA processing. The protein is RNA 3'-terminal phosphate cyclase of Koribacter versatilis (strain Ellin345).